The following is a 278-amino-acid chain: 4-diphosphocytidyl-2-C-methyl-D-erythritol kinase (278 aa).

The active site involves Lys-10. An ATP-binding site is contributed by 93-103 (PMGGGLGGGSS). Asp-135 is an active-site residue.

This sequence belongs to the GHMP kinase family. IspE subfamily.

The enzyme catalyses 4-CDP-2-C-methyl-D-erythritol + ATP = 4-CDP-2-C-methyl-D-erythritol 2-phosphate + ADP + H(+). The protein operates within isoprenoid biosynthesis; isopentenyl diphosphate biosynthesis via DXP pathway; isopentenyl diphosphate from 1-deoxy-D-xylulose 5-phosphate: step 3/6. Its function is as follows. Catalyzes the phosphorylation of the position 2 hydroxy group of 4-diphosphocytidyl-2C-methyl-D-erythritol. In Thiobacillus denitrificans (strain ATCC 25259 / T1), this protein is 4-diphosphocytidyl-2-C-methyl-D-erythritol kinase.